A 526-amino-acid polypeptide reads, in one-letter code: Peptide chain release factor 3 (526 aa).

Residues 8–277 (NKRRTFAIIS…GLTEWAPKPQ (270 aa)) form the tr-type G domain. Residues 17–24 (SHPDAGKT), 85–89 (DTPGH), and 139–142 (NKLD) each bind GTP.

It belongs to the TRAFAC class translation factor GTPase superfamily. Classic translation factor GTPase family. PrfC subfamily.

It localises to the cytoplasm. Functionally, increases the formation of ribosomal termination complexes and stimulates activities of RF-1 and RF-2. It binds guanine nucleotides and has strong preference for UGA stop codons. It may interact directly with the ribosome. The stimulation of RF-1 and RF-2 is significantly reduced by GTP and GDP, but not by GMP. The polypeptide is Peptide chain release factor 3 (Actinobacillus pleuropneumoniae serotype 3 (strain JL03)).